The following is a 452-amino-acid chain: Protein FAM81B (452 aa).

2 stretches are compositionally biased toward polar residues: residues Met1 to Ser11 and Ile38 to Ala55. The disordered stretch occupies residues Met1–Ser85. 2 coiled-coil regions span residues Ile164–Ala192 and Leu329–Val452.

It belongs to the FAM81 family.

This Homo sapiens (Human) protein is Protein FAM81B (FAM81B).